Here is a 515-residue protein sequence, read N- to C-terminus: tRNA pseudouridine synthase Pus10 (515 aa).

Positions 21 and 24 each coordinate Zn(2+). Residues 42–85 (KEVTYELQKYLSHGDPAEENDTPPSKKAKIEEDTSSNEHLGNCE) adopt a coiled-coil conformation. The disordered stretch occupies residues 55-82 (GDPAEENDTPPSKKAKIEEDTSSNEHLG). Zn(2+) is bound by residues C96 and C99. The segment at 291–304 (TPWIIDGERKIESS) is RNA binding forefinger loop. D331 serves as the catalytic Nucleophile. An RNA binding thumb loop region spans residues 428–443 (QKTPLRVLHRRPLASR).

It belongs to the pseudouridine synthase Pus10 family.

The protein resides in the nucleus. The protein localises to the cytoplasm. Its subcellular location is the mitochondrion. It catalyses the reaction uridine(55) in tRNA = pseudouridine(55) in tRNA. The enzyme catalyses uridine(54) in tRNA = pseudouridine(54) in tRNA. In terms of biological role, protein with different functions depending on its subcellular location: involved in miRNA processing in the nucleus and acts as a tRNA pseudouridylate synthase in the cytoplasm. In the cytoplasm, acts as a pseudouridylate synthase by catalyzing synthesis of pseudouridine(54) and pseudouridine(55) from uracil-54 and uracil-55, respectively, in the psi GC loop of a subset of tRNAs. tRNA pseudouridylate synthase activity is enhanced by the presence of 1-methyladenosine at position 53-61 of tRNAs. Does not show tRNA pseudouridylate synthase activity in the nucleus. In the nucleus, promotes primary microRNAs (pri-miRNAs) processing independently of its RNA pseudouridylate synthase activity. Binds pri-miRNAs. This Xenopus laevis (African clawed frog) protein is tRNA pseudouridine synthase Pus10.